The following is a 427-amino-acid chain: Enolase (427 aa).

Gln164 lines the (2R)-2-phosphoglycerate pocket. The Proton donor role is filled by Glu206. Residues Asp243, Glu284, and Asp311 each coordinate Mg(2+). (2R)-2-phosphoglycerate contacts are provided by Lys336, Arg365, Ser366, and Lys387. Lys336 acts as the Proton acceptor in catalysis.

Belongs to the enolase family. Requires Mg(2+) as cofactor.

The protein resides in the cytoplasm. It localises to the secreted. It is found in the cell surface. It catalyses the reaction (2R)-2-phosphoglycerate = phosphoenolpyruvate + H2O. It functions in the pathway carbohydrate degradation; glycolysis; pyruvate from D-glyceraldehyde 3-phosphate: step 4/5. Catalyzes the reversible conversion of 2-phosphoglycerate (2-PG) into phosphoenolpyruvate (PEP). It is essential for the degradation of carbohydrates via glycolysis. This chain is Enolase, found in Synechococcus sp. (strain JA-2-3B'a(2-13)) (Cyanobacteria bacterium Yellowstone B-Prime).